The following is a 146-amino-acid chain: Acidic phospholipase A2 S5-32M (146 aa).

Residues 1–19 (MYPAHLLVLLAVCVSLLGA) form the signal peptide. The propeptide occupies 20–27 (ASIPPQPL). 7 cysteine pairs are disulfide-bonded: Cys38–Cys98, Cys54–Cys145, Cys56–Cys72, Cys71–Cys126, Cys78–Cys119, Cys87–Cys112, and Cys105–Cys117. Ca(2+)-binding residues include Tyr55, Gly57, and Gly59. Residue His75 is part of the active site. Asp76 is a Ca(2+) binding site. The active site involves Asp120.

It belongs to the phospholipase A2 family. Group I subfamily. D49 sub-subfamily. The cofactor is Ca(2+). As to expression, expressed by the venom gland.

It localises to the secreted. It catalyses the reaction a 1,2-diacyl-sn-glycero-3-phosphocholine + H2O = a 1-acyl-sn-glycero-3-phosphocholine + a fatty acid + H(+). Functionally, snake venom phospholipase A2 (PLA2) that inhibits collagen-induced platelet aggregation. PLA2 catalyzes the calcium-dependent hydrolysis of the 2-acyl groups in 3-sn-phosphoglycerides. The protein is Acidic phospholipase A2 S5-32M of Austrelaps superbus (Lowland copperhead snake).